The following is a 304-amino-acid chain: N-acetylglucosaminyl-phosphatidylinositol de-N-acetylase (304 aa).

Residues 1 to 20 (MKMLRRTKVNFSKLLYKITK) lie on the Lumenal side of the membrane. A helical membrane pass occupies residues 21-38 (LAIVLTILYIYFTPKIVS). Topologically, residues 39–304 (RNNASLQHIF…FVNEFDVYTY (266 aa)) are cytoplasmic.

Belongs to the PIGL family.

The protein localises to the endoplasmic reticulum membrane. The catalysed reaction is a 6-(N-acetyl-alpha-D-glucosaminyl)-1-(1,2-diacyl-sn-glycero-3-phospho)-1D-myo-inositol + H2O = a 6-(alpha-D-glucosaminyl)-1-(1,2-diacyl-sn-glycero-3-phospho)-1D-myo-inositol + acetate. It participates in glycolipid biosynthesis; glycosylphosphatidylinositol-anchor biosynthesis. Its function is as follows. Involved in the second step of GPI biosynthesis. De-N-acetylation of N-acetylglucosaminyl-phosphatidylinositol. The polypeptide is N-acetylglucosaminyl-phosphatidylinositol de-N-acetylase (GPI12) (Saccharomyces cerevisiae (strain ATCC 204508 / S288c) (Baker's yeast)).